The following is a 138-amino-acid chain: Small ribosomal subunit protein uS12m (138 aa).

The N-terminal 29 residues, 1–29 (MSWSGLLHGLNTSLTCGPALVPRLWATCS), are a transit peptide targeting the mitochondrion. Positions 36 to 56 (MHRLGPPKRPPRKLGPTEGRP) are disordered.

Belongs to the universal ribosomal protein uS12 family. Component of the mitochondrial small ribosomal subunit (mt-SSU). Mature mammalian 55S mitochondrial ribosomes consist of a small (28S) and a large (39S) subunit. The 28S small subunit contains a 12S ribosomal RNA (12S mt-rRNA) and 30 different proteins. The 39S large subunit contains a 16S rRNA (16S mt-rRNA), a copy of mitochondrial valine transfer RNA (mt-tRNA(Val)), which plays an integral structural role, and 52 different proteins.

It is found in the mitochondrion. The polypeptide is Small ribosomal subunit protein uS12m (MRPS12) (Homo sapiens (Human)).